We begin with the raw amino-acid sequence, 309 residues long: Coenzyme PQQ synthesis protein B (309 aa).

It belongs to the PqqB family.

Its pathway is cofactor biosynthesis; pyrroloquinoline quinone biosynthesis. May be involved in the transport of PQQ or its precursor to the periplasm. The chain is Coenzyme PQQ synthesis protein B from Nitrosococcus oceani (strain ATCC 19707 / BCRC 17464 / JCM 30415 / NCIMB 11848 / C-107).